The primary structure comprises 133 residues: Phosphoribosyl-ATP pyrophosphatase (133 aa).

The segment at 1-22 (MGKPATKPAPKPSKQQDDKKSD) is disordered.

The protein belongs to the PRA-PH family.

It localises to the cytoplasm. The enzyme catalyses 1-(5-phospho-beta-D-ribosyl)-ATP + H2O = 1-(5-phospho-beta-D-ribosyl)-5'-AMP + diphosphate + H(+). It participates in amino-acid biosynthesis; L-histidine biosynthesis; L-histidine from 5-phospho-alpha-D-ribose 1-diphosphate: step 2/9. The sequence is that of Phosphoribosyl-ATP pyrophosphatase from Gluconobacter oxydans (strain 621H) (Gluconobacter suboxydans).